We begin with the raw amino-acid sequence, 189 residues long: MTLFVGLGNPGSKYEDTRHNIGFKVIDSLVDDLGARNISKNAFQGELYRIANTLFLKPTTFMNLSGKSIETVKQFFKIELEDIIVIHDDIDLPFGAVRFKRGGGHGGHNGLRSLDAHIGKEYIRVRIGVGKPEHKSQVADYVLHRFSEEEEKEIERLVKHVSNACKALLCEDLNKVKSYYSLKSIEGLE.

Y14 provides a ligand contact to tRNA. H19 serves as the catalytic Proton acceptor. Residues F61, N63, and N109 each coordinate tRNA.

The protein belongs to the PTH family. As to quaternary structure, monomer.

It localises to the cytoplasm. It catalyses the reaction an N-acyl-L-alpha-aminoacyl-tRNA + H2O = an N-acyl-L-amino acid + a tRNA + H(+). Functionally, hydrolyzes ribosome-free peptidyl-tRNAs (with 1 or more amino acids incorporated), which drop off the ribosome during protein synthesis, or as a result of ribosome stalling. Its function is as follows. Catalyzes the release of premature peptidyl moieties from peptidyl-tRNA molecules trapped in stalled 50S ribosomal subunits, and thus maintains levels of free tRNAs and 50S ribosomes. The protein is Peptidyl-tRNA hydrolase of Sulfurovum sp. (strain NBC37-1).